We begin with the raw amino-acid sequence, 294 residues long: Lipoyl synthase (294 aa).

[4Fe-4S] cluster is bound by residues Cys-35, Cys-40, Cys-46, Cys-61, Cys-65, Cys-68, and Ser-275. Positions 46-264 (CWGGGTATVM…REAGLGLGFR (219 aa)) constitute a Radical SAM core domain.

It belongs to the radical SAM superfamily. Lipoyl synthase family. The cofactor is [4Fe-4S] cluster.

The protein localises to the cytoplasm. It carries out the reaction [[Fe-S] cluster scaffold protein carrying a second [4Fe-4S](2+) cluster] + N(6)-octanoyl-L-lysyl-[protein] + 2 oxidized [2Fe-2S]-[ferredoxin] + 2 S-adenosyl-L-methionine + 4 H(+) = [[Fe-S] cluster scaffold protein] + N(6)-[(R)-dihydrolipoyl]-L-lysyl-[protein] + 4 Fe(3+) + 2 hydrogen sulfide + 2 5'-deoxyadenosine + 2 L-methionine + 2 reduced [2Fe-2S]-[ferredoxin]. Its pathway is protein modification; protein lipoylation via endogenous pathway; protein N(6)-(lipoyl)lysine from octanoyl-[acyl-carrier-protein]: step 2/2. In terms of biological role, catalyzes the radical-mediated insertion of two sulfur atoms into the C-6 and C-8 positions of the octanoyl moiety bound to the lipoyl domains of lipoate-dependent enzymes, thereby converting the octanoylated domains into lipoylated derivatives. This chain is Lipoyl synthase, found in Anaeromyxobacter sp. (strain Fw109-5).